A 341-amino-acid polypeptide reads, in one-letter code: S-adenosylmethionine:tRNA ribosyltransferase-isomerase (341 aa).

Belongs to the QueA family. In terms of assembly, monomer.

It localises to the cytoplasm. It carries out the reaction 7-aminomethyl-7-carbaguanosine(34) in tRNA + S-adenosyl-L-methionine = epoxyqueuosine(34) in tRNA + adenine + L-methionine + 2 H(+). Its pathway is tRNA modification; tRNA-queuosine biosynthesis. Its function is as follows. Transfers and isomerizes the ribose moiety from AdoMet to the 7-aminomethyl group of 7-deazaguanine (preQ1-tRNA) to give epoxyqueuosine (oQ-tRNA). This Staphylococcus saprophyticus subsp. saprophyticus (strain ATCC 15305 / DSM 20229 / NCIMB 8711 / NCTC 7292 / S-41) protein is S-adenosylmethionine:tRNA ribosyltransferase-isomerase.